The sequence spans 209 residues: Thymidylate kinase (209 aa).

Residue 10–17 coordinates ATP; the sequence is GIDGCGKS.

This sequence belongs to the thymidylate kinase family.

The catalysed reaction is dTMP + ATP = dTDP + ADP. Phosphorylation of dTMP to form dTDP in both de novo and salvage pathways of dTTP synthesis. The polypeptide is Thymidylate kinase (Synechococcus sp. (strain CC9902)).